A 313-amino-acid polypeptide reads, in one-letter code: ADP-L-glycero-D-manno-heptose-6-epimerase (313 aa).

NADP(+) is bound by residues 10 to 11, 31 to 32, K38, R53, 75 to 79, and N92; these read MI, DN, and EGACS. Y139 (proton acceptor) is an active-site residue. Position 143 (K143) interacts with NADP(+). Residue N174 participates in substrate binding. NADP(+) contacts are provided by V175 and K183. The active-site Proton acceptor is K183. Substrate contacts are provided by residues S185, H192, 206–209, R214, and Y277; that span reads FEGS.

This sequence belongs to the NAD(P)-dependent epimerase/dehydratase family. HldD subfamily. Homopentamer. It depends on NADP(+) as a cofactor.

It carries out the reaction ADP-D-glycero-beta-D-manno-heptose = ADP-L-glycero-beta-D-manno-heptose. It functions in the pathway nucleotide-sugar biosynthesis; ADP-L-glycero-beta-D-manno-heptose biosynthesis; ADP-L-glycero-beta-D-manno-heptose from D-glycero-beta-D-manno-heptose 7-phosphate: step 4/4. It participates in bacterial outer membrane biogenesis; LPS core biosynthesis. Catalyzes the interconversion between ADP-D-glycero-beta-D-manno-heptose and ADP-L-glycero-beta-D-manno-heptose via an epimerization at carbon 6 of the heptose. This chain is ADP-L-glycero-D-manno-heptose-6-epimerase, found in Vibrio parahaemolyticus serotype O3:K6 (strain RIMD 2210633).